The following is a 133-amino-acid chain: Pheromone-regulated membrane protein 3 (133 aa).

Residues 1 to 104 (MTAMKEDNAA…SKVQRENKGS (104 aa)) lie on the Nuclear side of the membrane. A disordered region spans residues 36–100 (ADGFVINKAK…DASESKVQRE (65 aa)). The Bipartite nuclear localization signal signature appears at 69 to 75 (GRVRKHK). Positions 90–100 (KDASESKVQRE) are enriched in basic and acidic residues. A helical membrane pass occupies residues 105–127 (FYQGAIFGSFLGAAVTTVLSNLA). Residues 128-133 (VKALQN) lie on the Perinuclear space side of the membrane.

As to quaternary structure, interacts with KAR5.

It localises to the nucleus outer membrane. It is found in the cytoplasm. The protein resides in the cytoskeleton. Its subcellular location is the microtubule organizing center. The protein localises to the spindle pole body. Its function is as follows. Required for the fusion of nuclear envelopes during mating, ensuring proper karyogamy. Plays a role in the initiation of outer nuclear envelope fusion. In Saccharomyces cerevisiae (strain ATCC 204508 / S288c) (Baker's yeast), this protein is Pheromone-regulated membrane protein 3 (PRM3).